We begin with the raw amino-acid sequence, 487 residues long: b(0,+)-type amino acid transporter 1 (487 aa).

A disordered region spans residues 1 to 22; that stretch reads MGETVPRRRREDEKSIQSDEPK. The Cytoplasmic segment spans residues 1–31; that stretch reads MGETVPRRRREDEKSIQSDEPKTTSLQKEVG. Ser-18 carries the post-translational modification Phosphoserine. The helical transmembrane segment at 32–55 threads the bilayer; sequence LISGICIIVGTIIGSGIFISPKSV. Residue 43–47 coordinates L-arginine; sequence IIGSG. Residues 56 to 62 are Extracellular-facing; it reads LSNTQAV. Residues 63-84 traverse the membrane as a helical segment; the sequence is GPCLIIWAACGVLGTLGALCFA. Topologically, residues 85-110 are cytoplasmic; sequence ELGTMITKSGGEYPYLMEAFGPIPAY. The chain crosses the membrane as a helical span at residues 111–137; the sequence is LFSWSSLLVMKPSSFAIICLSFSEYVA. The Extracellular portion of the chain corresponds to 138-147; sequence TPFYSGCEPP. A run of 2 helical transmembrane segments spans residues 148–169 and 170–193; these read KVVV…NSLS and VRLG…IIII. Over 194 to 217 the chain is Extracellular; the sequence is SGLVLLAQGNTKNFENSFEGAEVS. The helical transmembrane segment at 218 to 238 threads the bilayer; the sequence is VGAISLALYNGLWAYDGWNQL. Asp-233 serves as a coordination point for L-arginine. The Cytoplasmic portion of the chain corresponds to 239-251; that stretch reads NYITEELRNPFRN. Residues 252–274 traverse the membrane as a helical segment; the sequence is LPLAIIFGIPLVTVCYILINISY. Residues 275–302 are Extracellular-facing; it reads FTVMTPTELLQSQAVAVTFGDRVLYPAS. Residues 303-325 form a helical membrane-spanning segment; it reads WIVPVFVAFSTIGAANGTCFTAG. Topologically, residues 326–351 are cytoplasmic; the sequence is RLVYVAGREGHMLKVLSYISVRRLTP. 2 consecutive transmembrane segments (helical) span residues 352–370 and 371–391; these read APAI…IPGD and INSL…LTIL. The Cytoplasmic portion of the chain corresponds to 392 to 410; the sequence is GLIVMRFTRKELERPIKVP. The helical transmembrane segment at 411–431 threads the bilayer; sequence IFIPILVTFIAAFLVLAPVIT. Residues 432–434 are Extracellular-facing; it reads NPA. The chain crosses the membrane as a helical span at residues 435-450; sequence WEYLYCVLFILSGLVF. At 451 to 487 the chain is on the cytoplasmic side; that stretch reads YFLFVYYKFEWAQKISKPITMHLQMLMEVVPPEPDPK.

The protein belongs to the amino acid-polyamine-organocation (APC) superfamily. In terms of assembly, disulfide-linked heterodimer composed of the catalytic light chain subunit SLC7A9 and the heavy chain subunit. The heterodimer is the minimal functional unit. Assembles in heterotetramers (dimers of heterodimers) and higher order oligomers. Interacts with CAV1. Kidney and small intestine.

The protein localises to the apical cell membrane. The catalysed reaction is L-leucine(out) + L-arginine(in) = L-leucine(in) + L-arginine(out). It carries out the reaction L-histidine(out) + L-arginine(in) = L-histidine(in) + L-arginine(out). The enzyme catalyses L-arginine(in) + L-phenylalanine(out) = L-arginine(out) + L-phenylalanine(in). It catalyses the reaction L-cysteine(out) + L-arginine(in) = L-cysteine(in) + L-arginine(out). The catalysed reaction is L-cystine(out) + L-arginine(in) = L-cystine(in) + L-arginine(out). It carries out the reaction L-lysine(out) + L-arginine(in) = L-lysine(in) + L-arginine(out). Mediates the electrogenic exchange between cationic amino acids and neutral amino acids, with a stoichiometry of 1:1. Has system b(0,+)-like activity with high affinity for extracellular cationic amino acids and L-cystine and lower affinity for intracellular neutral amino acids. Substrate exchange is driven by high concentration of intracellular neutral amino acids and the intracellular reduction of L-cystine to L-cysteine. Required for reabsorption of L-cystine and dibasic amino acids across the brush border membrane in renal proximal tubules. The polypeptide is b(0,+)-type amino acid transporter 1 (Oryctolagus cuniculus (Rabbit)).